Reading from the N-terminus, the 192-residue chain is Flagellar transcriptional regulator FlhC (192 aa).

Residues C137, C140, C157, and C160 each contribute to the Zn(2+) site.

Belongs to the FlhC family. As to quaternary structure, heterohexamer composed of two FlhC and four FlhD subunits. Each FlhC binds a FlhD dimer, forming a heterotrimer, and a hexamer assembles by dimerization of two heterotrimers. It depends on Zn(2+) as a cofactor.

Its subcellular location is the cytoplasm. In terms of biological role, functions in complex with FlhD as a master transcriptional regulator that regulates transcription of several flagellar and non-flagellar operons by binding to their promoter region. Activates expression of class 2 flagellar genes, including fliA, which is a flagellum-specific sigma factor that turns on the class 3 genes. Also regulates genes whose products function in a variety of physiological pathways. The sequence is that of Flagellar transcriptional regulator FlhC from Escherichia coli O6:H1 (strain CFT073 / ATCC 700928 / UPEC).